Here is a 332-residue protein sequence, read N- to C-terminus: 2,3-diketo-L-gulonate reductase (332 aa).

His44 functions as the Proton donor in the catalytic mechanism. NAD(+) contacts are provided by residues 168 to 174 (ITMVDMS), 224 to 225 (WK), and 304 to 306 (GHE).

This sequence belongs to the LDH2/MDH2 oxidoreductase family. DlgD subfamily. In terms of assembly, homodimer.

It is found in the cytoplasm. The catalysed reaction is 3-dehydro-L-gulonate + NAD(+) = 2,3-dioxo-L-gulonate + NADH + H(+). It catalyses the reaction 3-dehydro-L-gulonate + NADP(+) = 2,3-dioxo-L-gulonate + NADPH + H(+). Catalyzes the reduction of 2,3-diketo-L-gulonate in the presence of NADH, to form 3-keto-L-gulonate. In Escherichia coli (strain K12 / MC4100 / BW2952), this protein is 2,3-diketo-L-gulonate reductase.